Reading from the N-terminus, the 435-residue chain is Adenylosuccinate synthetase (435 aa).

Residues 13 to 19 (GDEGKGK) and 41 to 43 (GHT) contribute to the GTP site. The active-site Proton acceptor is D14. Residues D14 and G41 each coordinate Mg(2+). IMP-binding positions include 14-17 (DEGK), 39-42 (NAGH), T131, R145, Q226, T241, and R309. Residue H42 is the Proton donor of the active site. 305 to 311 (TVTGRKR) serves as a coordination point for substrate. GTP contacts are provided by residues R311, 337 to 339 (KLD), and 419 to 421 (STG).

Belongs to the adenylosuccinate synthetase family. As to quaternary structure, homodimer. It depends on Mg(2+) as a cofactor.

Its subcellular location is the cytoplasm. The catalysed reaction is IMP + L-aspartate + GTP = N(6)-(1,2-dicarboxyethyl)-AMP + GDP + phosphate + 2 H(+). It participates in purine metabolism; AMP biosynthesis via de novo pathway; AMP from IMP: step 1/2. In terms of biological role, plays an important role in the de novo pathway of purine nucleotide biosynthesis. Catalyzes the first committed step in the biosynthesis of AMP from IMP. The chain is Adenylosuccinate synthetase from Dechloromonas aromatica (strain RCB).